A 413-amino-acid polypeptide reads, in one-letter code: Alpha-1-antitrypsin-like protein GS55-MS (413 aa).

The first 24 residues, 1–24 (MPSSISWGLLLLAGLSCLVAGSLA), serve as a signal peptide directing secretion. 3 N-linked (GlcNAc...) asparagine glycosylation sites follow: N65, N102, and N266. An RCL region spans residues 368–387 (GATFLEMMPMSLPPEVKFDK).

It belongs to the serpin family.

The protein localises to the secreted. Functionally, inhibitor of serine proteases. Its primary target is elastase, but it also has a moderate affinity for plasmin and thrombin. The chain is Alpha-1-antitrypsin-like protein GS55-MS from Ictidomys tridecemlineatus (Thirteen-lined ground squirrel).